We begin with the raw amino-acid sequence, 165 residues long: Xanthine-guanine phosphoribosyltransferase (165 aa).

5-phospho-alpha-D-ribose 1-diphosphate is bound by residues 41 to 42 (RG) and 98 to 106 (DDLTDTGKT). Asp-99 provides a ligand contact to Mg(2+). Guanine is bound by residues Asp-102 and Ile-145. Xanthine is bound by residues Asp-102 and Ile-145. Residues 102–106 (DTGKT) and 144–145 (WI) each bind GMP.

Belongs to the purine/pyrimidine phosphoribosyltransferase family. XGPT subfamily. As to quaternary structure, homotetramer. Mg(2+) serves as cofactor.

Its subcellular location is the cell inner membrane. It catalyses the reaction GMP + diphosphate = guanine + 5-phospho-alpha-D-ribose 1-diphosphate. The enzyme catalyses XMP + diphosphate = xanthine + 5-phospho-alpha-D-ribose 1-diphosphate. The catalysed reaction is IMP + diphosphate = hypoxanthine + 5-phospho-alpha-D-ribose 1-diphosphate. The protein operates within purine metabolism; GMP biosynthesis via salvage pathway; GMP from guanine: step 1/1. Its pathway is purine metabolism; XMP biosynthesis via salvage pathway; XMP from xanthine: step 1/1. Functionally, purine salvage pathway enzyme that catalyzes the transfer of the ribosyl-5-phosphate group from 5-phospho-alpha-D-ribose 1-diphosphate (PRPP) to the N9 position of the 6-oxopurines guanine and xanthine to form the corresponding ribonucleotides GMP (guanosine 5'-monophosphate) and XMP (xanthosine 5'-monophosphate), with the release of PPi. To a lesser extent, also acts on hypoxanthine. The sequence is that of Xanthine-guanine phosphoribosyltransferase from Brucella anthropi (strain ATCC 49188 / DSM 6882 / CCUG 24695 / JCM 21032 / LMG 3331 / NBRC 15819 / NCTC 12168 / Alc 37) (Ochrobactrum anthropi).